The following is a 287-amino-acid chain: MSQKEIWYETLHANFGQYFSVDRVLYHEKTDHQDLIIFENDALGRVMALDGVVQTTERDEFIYHEMLTHVPLLSHGNAKRVLIIGGGDGGMLREVSRHHGVEHITMVEIDAGVVEFCRQYLPNHSAGSYDDPRFNLVIDDGVNFVRQCSDKFDVIISDCTDPIGPGESLFTSDFYQGCARCLNEGGIFVAQNGVCFLQQDEAVGSHKKLGHYFKDVSFYQAAIPTYYGGIMTFAWASNNPALRQIDATTLRQRFAQSGITCRYYTPDVHIGSFALPQYLLSALQNAQ.

Residues Glu5 to Asn238 form the PABS domain. Gln33 contacts S-methyl-5'-thioadenosine. Residues His64 and Asp88 each coordinate spermidine. S-methyl-5'-thioadenosine contacts are provided by residues Glu108 and Asp140–Gly141. The active-site Proton acceptor is Asp158. Asp158–Asp161 is a binding site for spermidine. Pro165 serves as a coordination point for S-methyl-5'-thioadenosine.

This sequence belongs to the spermidine/spermine synthase family. As to quaternary structure, homodimer or homotetramer.

It localises to the cytoplasm. It carries out the reaction S-adenosyl 3-(methylsulfanyl)propylamine + putrescine = S-methyl-5'-thioadenosine + spermidine + H(+). It participates in amine and polyamine biosynthesis; spermidine biosynthesis; spermidine from putrescine: step 1/1. In terms of biological role, catalyzes the irreversible transfer of a propylamine group from the amino donor S-adenosylmethioninamine (decarboxy-AdoMet) to putrescine (1,4-diaminobutane) to yield spermidine. This is Polyamine aminopropyltransferase from Pectobacterium carotovorum subsp. carotovorum (strain PC1).